A 359-amino-acid chain; its full sequence is Outer membrane protein P2 (359 aa).

Positions 1–20 (MKKTLAALIVGAFAASAANA) are cleaved as a signal peptide.

This sequence belongs to the Gram-negative porin family. As to quaternary structure, homotrimer.

The protein localises to the cell outer membrane. Functionally, forms pores that allow passive diffusion of small molecules across the outer membrane. The polypeptide is Outer membrane protein P2 (ompP2) (Haemophilus influenzae (strain ATCC 51907 / DSM 11121 / KW20 / Rd)).